A 717-amino-acid chain; its full sequence is Catalase-peroxidase (717 aa).

The signal sequence occupies residues 1–12 (MTSKGMCPVAHG). A cross-link (tryptophyl-tyrosyl-methioninium (Trp-Tyr) (with M-247)) is located at residues 93–221 (WHSAGSYRIA…LAAVMMGLIY (129 aa)). Histidine 94 (proton acceptor) is an active-site residue. The tryptophyl-tyrosyl-methioninium (Tyr-Met) (with W-93) cross-link spans 221–247 (YVNPEGVDGKPDPLKTAQDMRVTFARM). Histidine 262 is a binding site for heme b.

Belongs to the peroxidase family. Peroxidase/catalase subfamily. In terms of assembly, homodimer or homotetramer. Heme b serves as cofactor. Formation of the three residue Trp-Tyr-Met cross-link is important for the catalase, but not the peroxidase activity of the enzyme.

It catalyses the reaction H2O2 + AH2 = A + 2 H2O. The enzyme catalyses 2 H2O2 = O2 + 2 H2O. Bifunctional enzyme with both catalase and broad-spectrum peroxidase activity. This chain is Catalase-peroxidase, found in Polynucleobacter asymbioticus (strain DSM 18221 / CIP 109841 / QLW-P1DMWA-1) (Polynucleobacter necessarius subsp. asymbioticus).